A 276-amino-acid chain; its full sequence is Biotin synthase (276 aa).

The 226-residue stretch at Met1–Arg226 folds into the Radical SAM core domain. [4Fe-4S] cluster-binding residues include Cys17, Cys21, and Cys24. [2Fe-2S] cluster is bound by residues Cys61, Cys95, and Cys153.

Belongs to the radical SAM superfamily. Biotin synthase family. As to quaternary structure, homodimer. Requires [4Fe-4S] cluster as cofactor. [2Fe-2S] cluster is required as a cofactor.

The catalysed reaction is (4R,5S)-dethiobiotin + (sulfur carrier)-SH + 2 reduced [2Fe-2S]-[ferredoxin] + 2 S-adenosyl-L-methionine = (sulfur carrier)-H + biotin + 2 5'-deoxyadenosine + 2 L-methionine + 2 oxidized [2Fe-2S]-[ferredoxin]. It participates in cofactor biosynthesis; biotin biosynthesis; biotin from 7,8-diaminononanoate: step 2/2. Functionally, catalyzes the conversion of dethiobiotin (DTB) to biotin by the insertion of a sulfur atom into dethiobiotin via a radical-based mechanism. The chain is Biotin synthase from Nautilia profundicola (strain ATCC BAA-1463 / DSM 18972 / AmH).